The sequence spans 61 residues: Large ribosomal subunit protein bL32 (61 aa).

This sequence belongs to the bacterial ribosomal protein bL32 family.

The polypeptide is Large ribosomal subunit protein bL32 (Syntrophus aciditrophicus (strain SB)).